The sequence spans 217 residues: Eukaryotic translation initiation factor 4E (217 aa).

Positions 1–11 (MATVEPETTPT) are enriched in low complexity. The tract at residues 1 to 27 (MATVEPETTPTTNPPPAEEEKTESNQE) is disordered. A2 is subject to N-acetylalanine. Phosphothreonine is present on T22. Residues 37-40 (HPLQ) are EIF4EBP1/2/3 binding. Position 56–57 (56–57 (WQ)) interacts with mRNA. The EIF4EBP1/2/3 binding stretch occupies residues 73 to 77 (WALYN). 102 to 103 (WE) is an mRNA binding site. Positions 132-139 (ETLLCLIG) are EIF4EBP1/2/3 binding. MRNA is bound by residues 157–162 (RAKGDK) and 205–207 (TKS). S209 carries the post-translational modification Phosphoserine; by PKC and MKNK2.

Belongs to the eukaryotic initiation factor 4E family. In terms of assembly, eIF4F is a multi-subunit complex, the composition of which varies with external and internal environmental conditions. It is composed of at least EIF4A, EIF4E and EIF4G1/EIF4G3. EIF4E is also known to interact with other partners. Interacts with EIF4ENIF1/4E-T; promotes recruitment to P-bodies and import into the nucleus. Hypophosphorylated EIF4EBP1, EIF4EBP2 and EIF4EBP3 compete with EIF4G1/EIF4G3 to interact with EIF4E; insulin stimulated MAP-kinase (MAPK1 and MAPK3) phosphorylation of EIF4EBP1 causes dissociation of the complex allowing EIF4G1/EIF4G3 to bind and consequent initiation of translation. Interacts mutually exclusive with EIF4A1 or EIF4A2. Interacts with NGDN and PIWIL2. Component of the CYFIP1-EIF4E-FMR1 complex composed of CYFIP, EIF4E and FMR1. Interacts directly with CYFIP1. Interacts with CLOCK. Binds to MKNK2 in nucleus. Interacts with LIMD1, WTIP and AJUBA. Interacts with APOBEC3G in an RNA-dependent manner. Interacts with LARP1. Interacts with METTL3. Interacts with RBM24; this interaction prevents EIF4E from binding to p53/TP53 mRNA and inhibits the assembly of translation initiation complex. Interacts with DDX3X; interaction is direct and in an RNA-independent manner; this interaction enhances EIF4E cap-binding ability and is required for the repression of cap-dependent translation and the increase of IRES-mediated translation. DDX3X competes with EIF4G1 for interaction with EIF4E. Interacts with EIF4G1; which in a mutual exclusive interaction associates either with EIF1 or with EIF4E on a common binding site. Interacts with BTG4 and CNOT7. Interacts with LRPPRC (via N-terminus); the interaction promotes association of EIF4E with 4ESE-containing mRNAs. Interacts with mRNA cleavage enzyme CPSF3 and its cofactor CPSF1. Interacts (via RING-type zinc finger) with PML; the interaction results in conformational changes of both interacting proteins and reduces EIF4E affinity for the 5' m7G cap of mRNA, thus reducing EIF4E-mediated mRNA nuclear export. Interacts with homeobox protein HHEX/PRH; the interaction inhibits EIF4E-mediated mRNA nuclear export. Interacts with homeobox protein HOXA9; the interaction positively regulates EIF4E-mediated mRNA nuclear export. Interacts with homeobox protein EMX2. (Microbial infection) Interacts with murine norovirus viral genome-linked protein; this interaction plays a role in translation of viral proteins. Phosphorylation increases the ability of the protein to bind to mRNA caps and to form the eIF4F complex. Phosphorylation also enhances its mRNA transport function. Phosphorylation at Ser-209 is not essential for protein synthesis.

The protein resides in the cytoplasm. The protein localises to the P-body. It is found in the stress granule. It localises to the nucleus. Its subcellular location is the nucleus speckle. The protein resides in the nuclear body. In terms of biological role, acts in the cytoplasm to initiate and regulate protein synthesis and is required in the nucleus for export of a subset of mRNAs from the nucleus to the cytoplasm which promotes processes such as RNA capping, processing and splicing. Component of the protein complex eIF4F, which is involved in the recognition of the mRNA cap, ATP-dependent unwinding of 5'-terminal secondary structure and recruitment of mRNA to the ribosome. This protein recognizes and binds the 7-methylguanosine (m7G)-containing mRNA cap during an early step in the initiation of protein synthesis and facilitates ribosome binding by inducing the unwinding of the mRNAs secondary structures. Together with EIF4G1, antagonizes the scanning promoted by EIF1-EIF4G1 and is required for TISU translation, a process where the TISU element recognition makes scanning unnecessary. In addition to its role in translation initiation, also acts as a regulator of translation and stability in the cytoplasm. Component of the CYFIP1-EIF4E-FMR1 complex which binds to the mRNA cap and mediates translational repression: in the complex, EIF4E mediates the binding to the mRNA cap. Component of a multiprotein complex that sequesters and represses translation of proneurogenic factors during neurogenesis. In P-bodies, component of a complex that mediates the storage of translationally inactive mRNAs in the cytoplasm and prevents their degradation. May play an important role in spermatogenesis through translational regulation of stage-specific mRNAs during germ cell development. As well as its roles in translation, also involved in mRNA nucleocytoplasmic transport. Its role in mRNA export from the nucleus to the cytoplasm relies on its ability to bind the m7G cap of RNAs and on the presence of the 50-nucleotide EIF4E sensitivity element (4ESE) in the 3'UTR of sensitive transcripts. Interaction with the 4ESE is mediated by LRPPRC which binds simultaneously to both EIF4E and the 4ESE, thereby acting as a platform for assembly for the RNA export complex. EIF4E-dependent mRNA export is independent of ongoing protein or RNA synthesis and is also NFX1-independent but is XPO1-dependent with LRPPRC interacting with XPO1 to form an EIF4E-dependent mRNA export complex. Alters the composition of the cytoplasmic face of the nuclear pore to promote RNA export by reducing RANBP2 expression, relocalizing nucleoporin NUP214 and increasing expression of RANBP1 and RNA export factors DDX19 and GLE1. Promotes the nuclear export of cyclin CCND1 mRNA. Promotes the nuclear export of NOS2/iNOS mRNA. Promotes the nuclear export of MDM2 mRNA. Also promotes the export of additional mRNAs, including others involved in the cell cycle. In the nucleus, binds to capped splice factor-encoding mRNAs and stimulates their nuclear export to enhance splice factor production by increasing their cytoplasmic availability to the translation machinery. May also regulate splicing through interaction with the spliceosome in an RNA and m7G cap-dependent manner. Also binds to some pre-mRNAs and may play a role in their recruitment to the spliceosome. Promotes steady-state capping of a subset of coding and non-coding RNAs by mediating nuclear export of capping machinery mRNAs including RNMT, RNGTT and RAMAC to enhance their translation. Stimulates mRNA 3'-end processing by promoting the expression of several core cleavage complex factors required for mRNA cleavage and polyadenylation, and may also have a direct effect through its interaction with the CPSF3 cleavage enzyme. Rescues cells from apoptosis by promoting activation of serine/threonine-protein kinase AKT1 through mRNA export of NBS1 which potentiates AKT1 phosphorylation and also through mRNA export of AKT1 effectors, allowing for increased production of these proteins. This Mus musculus (Mouse) protein is Eukaryotic translation initiation factor 4E.